A 160-amino-acid chain; its full sequence is S-ribosylhomocysteine lyase (160 aa).

Fe cation-binding residues include histidine 57, histidine 61, and cysteine 127.

The protein belongs to the LuxS family. Homodimer. Fe cation is required as a cofactor.

It carries out the reaction S-(5-deoxy-D-ribos-5-yl)-L-homocysteine = (S)-4,5-dihydroxypentane-2,3-dione + L-homocysteine. Its function is as follows. Involved in the synthesis of autoinducer 2 (AI-2) which is secreted by bacteria and is used to communicate both the cell density and the metabolic potential of the environment. The regulation of gene expression in response to changes in cell density is called quorum sensing. Catalyzes the transformation of S-ribosylhomocysteine (RHC) to homocysteine (HC) and 4,5-dihydroxy-2,3-pentadione (DPD). The chain is S-ribosylhomocysteine lyase from Streptococcus pneumoniae (strain CGSP14).